Reading from the N-terminus, the 391-residue chain is uncharacterized protein (391 aa).

Helical transmembrane passes span 7 to 27 (FILV…LPVI), 39 to 59 (AING…SPFM), 66 to 88 (LGFK…GFIW), 92 to 111 (VWVW…MLHF), 131 to 151 (SIYG…VPLV), 156 to 176 (SLPF…VFFL), 197 to 217 (FYQA…YGFL), 239 to 259 (VAII…PLGI), 269 to 289 (VLLV…VFPS), 292 to 312 (VIGG…TLGI), 329 to 349 (LLCG…GGWY), and 356 to 376 (ANLF…LVLG).

The protein belongs to the major facilitator superfamily.

The protein localises to the cell membrane. This is an uncharacterized protein from Bacillus subtilis (strain 168).